Reading from the N-terminus, the 762-residue chain is Polyribonucleotide nucleotidyltransferase (762 aa).

Mg(2+) is bound by residues aspartate 531 and aspartate 537. Residues proline 597 to isoleucine 656 enclose the KH domain. An S1 motif domain is found at glycine 668 to valine 737.

The protein belongs to the polyribonucleotide nucleotidyltransferase family. Mg(2+) is required as a cofactor.

It is found in the cytoplasm. The catalysed reaction is RNA(n+1) + phosphate = RNA(n) + a ribonucleoside 5'-diphosphate. Its function is as follows. Involved in mRNA degradation. Catalyzes the phosphorolysis of single-stranded polyribonucleotides processively in the 3'- to 5'-direction. In Mycobacterium marinum (strain ATCC BAA-535 / M), this protein is Polyribonucleotide nucleotidyltransferase.